The primary structure comprises 147 residues: Lysozyme C (147 aa).

The signal sequence occupies residues 1–18 (MKALVILGFLFLSVAVQG). One can recognise a C-type lysozyme domain in the interval 19–147 (KVFERCELAR…VSSYVEGCTL (129 aa)). 4 cysteine pairs are disulfide-bonded: Cys24–Cys145, Cys48–Cys133, Cys83–Cys99, and Cys95–Cys113. Active-site residues include Glu53 and Asp71.

The protein belongs to the glycosyl hydrolase 22 family. As to quaternary structure, monomer. As to expression, stomach-specific.

It catalyses the reaction Hydrolysis of (1-&gt;4)-beta-linkages between N-acetylmuramic acid and N-acetyl-D-glucosamine residues in a peptidoglycan and between N-acetyl-D-glucosamine residues in chitodextrins.. Its function is as follows. Lysozymes have primarily a bacteriolytic function; those in tissues and body fluids are associated with the monocyte-macrophage system and enhance the activity of immunoagents. The chain is Lysozyme C (LYZ1) from Bos taurus (Bovine).